A 355-amino-acid chain; its full sequence is Tyrosine recombinase XerC (355 aa).

In terms of domain architecture, Core-binding (CB) spans 4–89 (TQFDGDIDSF…AVRGFFAWAY (86 aa)). The tract at residues 137-181 (KDDGGAAAAPGSGKAAGKTADKSADTVNRSEAPARADKRDNARVT) is disordered. Residues 141 to 154 (GAAAAPGSGKAAGK) are compositionally biased toward low complexity. The Tyr recombinase domain maps to 158–349 (KSADTVNRSE…SIEQLKNRYG (192 aa)). Basic and acidic residues predominate over residues 168 to 178 (APARADKRDNA). Residues Arg-200, Lys-224, His-301, Arg-304, and His-327 contribute to the active site. Tyr-336 functions as the O-(3'-phospho-DNA)-tyrosine intermediate in the catalytic mechanism.

This sequence belongs to the 'phage' integrase family. XerC subfamily. Forms a cyclic heterotetrameric complex composed of two molecules of XerC and two molecules of XerD.

It is found in the cytoplasm. Functionally, site-specific tyrosine recombinase, which acts by catalyzing the cutting and rejoining of the recombining DNA molecules. The XerC-XerD complex is essential to convert dimers of the bacterial chromosome into monomers to permit their segregation at cell division. It also contributes to the segregational stability of plasmids. This chain is Tyrosine recombinase XerC, found in Bifidobacterium longum (strain DJO10A).